Here is a 387-residue protein sequence, read N- to C-terminus: Beta-carotene 4-ketolase (387 aa).

The interval Met1–Gln78 is disordered. Composition is skewed to polar residues over residues Asn43–Gly53 and Asp65–Gln78.

The enzyme catalyses echinenone + 2 AH2 + 2 O2 = canthaxanthin + 2 A + 3 H2O. It catalyses the reaction all-trans-beta-carotene + 2 AH2 + 2 O2 = echinenone + 2 A + 3 H2O. Its pathway is carotenoid biosynthesis. Functionally, involved in the biosynthesis of ketocarotenoids which are powerful anti-oxidative molecules. Catalyzes the conversion of beta-carotene to canthaxanthin via echinenone. This chain is Beta-carotene 4-ketolase, found in Protosiphon botryoides (Green alga).